We begin with the raw amino-acid sequence, 330 residues long: Protein TIFY 11f (330 aa).

The Tify 1 domain occupies 61 to 97; sequence EAAAAAQLKIMYGGRMLVFDDFFPAGGAVVELVRAAA. Residues 124 to 142 carry the Jas motif; that stretch reads PVVRKVSLQRFVEKRRRMR. A Nuclear localization signal motif is present at residues 126-133; that stretch reads VRKVSLQR. Residues 228-264 enclose the Tify 2 domain; the sequence is EAAAAAQLKIMYGGRMLVFDDFFPAGGAVVELVRAAA. Positions 267–330 are disordered; sequence GRDDDGARAR…SGRTDDAAFY (64 aa).

Belongs to the TIFY/JAZ family. In terms of processing, ubiquitinated. Targeted for degradation by the SCF(COI1) E3 ubiquitin ligase-proteasome pathway during jasmonate signaling.

Its subcellular location is the nucleus. In terms of biological role, repressor of jasmonate responses. This is Protein TIFY 11f from Oryza sativa subsp. japonica (Rice).